Consider the following 450-residue polypeptide: MTVFSLVASHHDLDLDTVARLSAGATGVGPALPGSGAAGAVVLATCNRVEIYAEADGAGVEAARAGLLSAVAASTSLPDEDVHAAFRTLDADATARHLFEVGVGLDSAVVGEREIAGQVRRALTAAQEAGTASGPLVRLFESATRTAKDVGSHTALGAAGRSVVSVALDLAEELRGLTDAAAQRDFWAGATILLIGTGAYAGTTLAQLADRGATTVGVHSASGRAEQFVADRGGWALALGGEAVAGAVAEADVIIGSSGGERQISPERLQELREGGRRPLTVVDLALSRDFDPAVADLPDVDLITLESVRLAAPEQAQVAVAEARALVDDAVEEYRAAQRGRSADAAIKALRRHTLGVLDRELERVRARHGCTAAAEEVEFALRRMVNQLLHEPSVRAKRLAAEGRLDRYEDALEAVFGIEAPGRPASEVGTVEAACPAHEDEGGAARIA.

Residues 45–48, S107, 112–114, and Q118 contribute to the substrate site; these read TCNR and ERE. C46 acts as the Nucleophile in catalysis. NADP(+) is bound at residue 196–201; sequence GTGAYA.

Belongs to the glutamyl-tRNA reductase family. In terms of assembly, homodimer.

The enzyme catalyses (S)-4-amino-5-oxopentanoate + tRNA(Glu) + NADP(+) = L-glutamyl-tRNA(Glu) + NADPH + H(+). It functions in the pathway porphyrin-containing compound metabolism; protoporphyrin-IX biosynthesis; 5-aminolevulinate from L-glutamyl-tRNA(Glu): step 1/2. Functionally, catalyzes the NADPH-dependent reduction of glutamyl-tRNA(Glu) to glutamate 1-semialdehyde (GSA). This is Glutamyl-tRNA reductase from Micrococcus luteus (strain ATCC 4698 / DSM 20030 / JCM 1464 / CCM 169 / CCUG 5858 / IAM 1056 / NBRC 3333 / NCIMB 9278 / NCTC 2665 / VKM Ac-2230) (Micrococcus lysodeikticus).